Consider the following 129-residue polypeptide: Glycine cleavage system H protein (129 aa).

The region spanning 24-106 (LVRIGISAFA…HGEGWLLLVK (83 aa)) is the Lipoyl-binding domain. An N6-lipoyllysine modification is found at lysine 65.

This sequence belongs to the GcvH family. In terms of assembly, the glycine cleavage system is composed of four proteins: P, T, L and H. It depends on (R)-lipoate as a cofactor.

The glycine cleavage system catalyzes the degradation of glycine. The H protein shuttles the methylamine group of glycine from the P protein to the T protein. The chain is Glycine cleavage system H protein from Prochlorococcus marinus (strain SARG / CCMP1375 / SS120).